Consider the following 135-residue polypeptide: Succinate dehydrogenase assembly factor 2, mitochondrial (135 aa).

The protein belongs to the SDHAF2 family. Interacts with the flavoprotein subunit within the SDH catalytic dimer.

The protein localises to the mitochondrion matrix. Functionally, plays an essential role in the assembly of succinate dehydrogenase (SDH), an enzyme complex (also referred to as respiratory complex II) that is a component of both the tricarboxylic acid (TCA) cycle and the mitochondrial electron transport chain, and which couples the oxidation of succinate to fumarate with the reduction of ubiquinone (coenzyme Q) to ubiquinol. Required for flavinylation (covalent attachment of FAD) of the flavoprotein subunit of the SDH catalytic dimer. In Meyerozyma guilliermondii (strain ATCC 6260 / CBS 566 / DSM 6381 / JCM 1539 / NBRC 10279 / NRRL Y-324) (Yeast), this protein is Succinate dehydrogenase assembly factor 2, mitochondrial.